A 491-amino-acid chain; its full sequence is Glutamate--tRNA ligase (491 aa).

Residues 12 to 22 (PSPTGTPHVGL) carry the 'HIGH' region motif. The tract at residues 111 to 134 (STPEEVEERHKAAGRDPKLGYDNF) is disordered. Residues 117 to 134 (EERHKAAGRDPKLGYDNF) are compositionally biased toward basic and acidic residues. A 'KMSKS' region motif is present at residues 256-260 (KLSKR). Lys259 provides a ligand contact to ATP.

This sequence belongs to the class-I aminoacyl-tRNA synthetase family. Glutamate--tRNA ligase type 1 subfamily. In terms of assembly, monomer.

The protein resides in the cytoplasm. It carries out the reaction tRNA(Glu) + L-glutamate + ATP = L-glutamyl-tRNA(Glu) + AMP + diphosphate. Catalyzes the attachment of glutamate to tRNA(Glu) in a two-step reaction: glutamate is first activated by ATP to form Glu-AMP and then transferred to the acceptor end of tRNA(Glu). The protein is Glutamate--tRNA ligase of Rhodococcus jostii (strain RHA1).